Reading from the N-terminus, the 396-residue chain is MALRTIDALDLAGKRVFIRVDFNVPLDPQGKVTDDARIRAALPTIRHAIQAKAKVILASHLGRPKGKPDDRTKLTLEPAAVRLSELLSQDVILADDCVGDGVKKLVRDLKDGHVLLLENLRFHPEEEKNDEAFARELASLADVWVNDAFGTAHRAHASTAGMAKFVKEKAAGFLVQKEVEYLGKALGSPARPFVAIVGGAKVSDKIKVLENLIAKADAVCVGGAMAYTFLKAQGVPVGRSLVEEDKLELARQILERAEARKVDLLLPVDHVCGAEPKETAERVVVNDRAIPDGLMGLDIGPKTLDRYRQRIAGAKTVFWNGPMGLFEQKPWSEGTFGVAKAMAASPAVTVVGGGDSAAAVEQAGLVDKMKHVSTGGGASLEFIEGRELPGVKACEE.

Substrate is bound by residues 21-23 (DFN), Arg37, 60-63 (HLGR), Arg121, and Arg154. ATP contacts are provided by residues Lys205, Gly296, Glu327, and 353–356 (GGDS).

It belongs to the phosphoglycerate kinase family. As to quaternary structure, monomer.

The protein resides in the cytoplasm. It carries out the reaction (2R)-3-phosphoglycerate + ATP = (2R)-3-phospho-glyceroyl phosphate + ADP. It participates in carbohydrate degradation; glycolysis; pyruvate from D-glyceraldehyde 3-phosphate: step 2/5. The sequence is that of Phosphoglycerate kinase from Anaeromyxobacter dehalogenans (strain 2CP-C).